The chain runs to 374 residues: Chaperone protein DnaJ (374 aa).

The J domain occupies aspartate 5–glycine 70. Residues glycine 133 to tyrosine 211 form a CR-type zinc finger. Residues cysteine 146, cysteine 149, cysteine 163, cysteine 166, cysteine 185, cysteine 188, cysteine 199, and cysteine 202 each coordinate Zn(2+). 4 CXXCXGXG motif repeats span residues cysteine 146–glycine 153, cysteine 163–glycine 170, cysteine 185–glycine 192, and cysteine 199–glycine 206.

This sequence belongs to the DnaJ family. As to quaternary structure, homodimer. Zn(2+) is required as a cofactor.

Its subcellular location is the cytoplasm. Functionally, participates actively in the response to hyperosmotic and heat shock by preventing the aggregation of stress-denatured proteins and by disaggregating proteins, also in an autonomous, DnaK-independent fashion. Unfolded proteins bind initially to DnaJ; upon interaction with the DnaJ-bound protein, DnaK hydrolyzes its bound ATP, resulting in the formation of a stable complex. GrpE releases ADP from DnaK; ATP binding to DnaK triggers the release of the substrate protein, thus completing the reaction cycle. Several rounds of ATP-dependent interactions between DnaJ, DnaK and GrpE are required for fully efficient folding. Also involved, together with DnaK and GrpE, in the DNA replication of plasmids through activation of initiation proteins. The polypeptide is Chaperone protein DnaJ (Pseudomonas putida (strain ATCC 700007 / DSM 6899 / JCM 31910 / BCRC 17059 / LMG 24140 / F1)).